The chain runs to 163 residues: Cyclic pyranopterin monophosphate synthase (163 aa).

Substrate contacts are provided by residues 79-81 and 117-118; these read LCH and ME. Aspartate 132 is a catalytic residue.

It belongs to the MoaC family. In terms of assembly, homohexamer; trimer of dimers.

It carries out the reaction (8S)-3',8-cyclo-7,8-dihydroguanosine 5'-triphosphate = cyclic pyranopterin phosphate + diphosphate. The protein operates within cofactor biosynthesis; molybdopterin biosynthesis. In terms of biological role, catalyzes the conversion of (8S)-3',8-cyclo-7,8-dihydroguanosine 5'-triphosphate to cyclic pyranopterin monophosphate (cPMP). In Chloroflexus aurantiacus (strain ATCC 29366 / DSM 635 / J-10-fl), this protein is Cyclic pyranopterin monophosphate synthase.